A 376-amino-acid polypeptide reads, in one-letter code: DNA replication and repair protein RecF (376 aa).

30–37 (GNNAQGKS) provides a ligand contact to ATP.

It belongs to the RecF family.

It is found in the cytoplasm. The RecF protein is involved in DNA metabolism; it is required for DNA replication and normal SOS inducibility. RecF binds preferentially to single-stranded, linear DNA. It also seems to bind ATP. The protein is DNA replication and repair protein RecF of Trichormus variabilis (strain ATCC 29413 / PCC 7937) (Anabaena variabilis).